Here is a 315-residue protein sequence, read N- to C-terminus: Acetyl-coenzyme A carboxylase carboxyl transferase subunit alpha (315 aa).

The CoA carboxyltransferase C-terminal domain occupies 32 to 289 (EIDLLEASLE…KQAFVDQLEQ (258 aa)).

This sequence belongs to the AccA family. As to quaternary structure, acetyl-CoA carboxylase is a heterohexamer composed of biotin carboxyl carrier protein (AccB), biotin carboxylase (AccC) and two subunits each of ACCase subunit alpha (AccA) and ACCase subunit beta (AccD).

It is found in the cytoplasm. It catalyses the reaction N(6)-carboxybiotinyl-L-lysyl-[protein] + acetyl-CoA = N(6)-biotinyl-L-lysyl-[protein] + malonyl-CoA. The protein operates within lipid metabolism; malonyl-CoA biosynthesis; malonyl-CoA from acetyl-CoA: step 1/1. In terms of biological role, component of the acetyl coenzyme A carboxylase (ACC) complex. First, biotin carboxylase catalyzes the carboxylation of biotin on its carrier protein (BCCP) and then the CO(2) group is transferred by the carboxyltransferase to acetyl-CoA to form malonyl-CoA. The protein is Acetyl-coenzyme A carboxylase carboxyl transferase subunit alpha of Staphylococcus haemolyticus (strain JCSC1435).